The sequence spans 262 residues: Homeobox protein vent1 (262 aa).

Composition is skewed to basic and acidic residues over residues 16–26 and 44–55; these read REEAPDGKDSV and YAKEIPRRKDGQ. Positions 16 to 129 are disordered; that stretch reads REEAPDGKDS…KSPKSDLQRR (114 aa). A compositionally biased stretch (polar residues) spans 58–79; sequence GEITSFQCSSEEARNRQFSNPS. Positions 114 to 128 are enriched in basic and acidic residues; that stretch reads DTEHRSKSPKSDLQR. Residues 127-186 constitute a DNA-binding region (homeobox); the sequence is QRRLRTAFTPQQITRLEQAFNKQRYLGASERKKLATSLQLSEIQVKTWFQNRRMKLKRQI.

It localises to the nucleus. Transcriptional repressor. Cooperates with vent2 in a ventral signaling pathway downstream of bmp4, which antagonizes the Spemann organizer and dorsal mesoderm formation, and leads to ventral mesoderm formation. Acts downstream of bmp4 to repress transcription of foxa4-B/XFD-1'. Binds to DNA with preference for the target sequence 5'-CTATT[T/C]G-3'. Also binds 5'-TGCATTTTG-3' at a lower frequency, and occasionally 5'-TTGATC-3'. Binds to the homeobox 2 (HBX2) repressor element in the promoter of the myf5 gene. Cooperates with vent2 to repress myf5 expression in the ventral domain. The chain is Homeobox protein vent1 from Xenopus tropicalis (Western clawed frog).